A 233-amino-acid chain; its full sequence is Cytochrome c oxidase subunit 3 (233 aa).

The next 4 membrane-spanning stretches (helical) occupy residues 62 to 82, 98 to 118, 135 to 155, and 172 to 192; these read VVLF…AYLI, LELL…FVMH, WFGI…YEYF, and VLTG…LSVL.

This sequence belongs to the cytochrome c oxidase subunit 3 family.

Its subcellular location is the cell membrane. It catalyses the reaction 4 Fe(II)-[cytochrome c] + O2 + 8 H(+)(in) = 4 Fe(III)-[cytochrome c] + 2 H2O + 4 H(+)(out). In Synechocystis sp. (strain ATCC 27184 / PCC 6803 / Kazusa), this protein is Cytochrome c oxidase subunit 3 (ctaE).